A 639-amino-acid polypeptide reads, in one-letter code: ATP-dependent zinc metalloprotease FtsH (639 aa).

Residues 1-4 (MNST) lie on the Cytoplasmic side of the membrane. The helical transmembrane segment at 5–25 (VKTIVFWVFILACCILLWQVF) threads the bilayer. Residues 26–104 (QRSSNTGKEQ…TVKDNSGSPW (79 aa)) lie on the Periplasmic side of the membrane. A helical membrane pass occupies residues 105–125 (WSILIQFSPVLVLVALWFFMI). The Cytoplasmic portion of the chain corresponds to 126–639 (RQMQSGGNKA…GLPEGSPSPA (514 aa)). ATP is bound at residue 196–203 (GPPGTGKT). Histidine 418 serves as a coordination point for Zn(2+). Glutamate 419 is a catalytic residue. Residues histidine 422 and aspartate 494 each coordinate Zn(2+). The interval 597 to 639 (KDLPPLKPSGGSGTATTDDVQQVLKPSSDRGAGGLPEGSPSPA) is disordered.

It in the central section; belongs to the AAA ATPase family. The protein in the C-terminal section; belongs to the peptidase M41 family. In terms of assembly, homohexamer. Zn(2+) is required as a cofactor.

The protein localises to the cell inner membrane. In terms of biological role, acts as a processive, ATP-dependent zinc metallopeptidase for both cytoplasmic and membrane proteins. Plays a role in the quality control of integral membrane proteins. This is ATP-dependent zinc metalloprotease FtsH from Acidobacterium capsulatum (strain ATCC 51196 / DSM 11244 / BCRC 80197 / JCM 7670 / NBRC 15755 / NCIMB 13165 / 161).